A 163-amino-acid polypeptide reads, in one-letter code: Nucleotide-binding protein YajQ (163 aa).

This sequence belongs to the YajQ family.

In terms of biological role, nucleotide-binding protein. The protein is Nucleotide-binding protein YajQ of Escherichia coli O81 (strain ED1a).